The primary structure comprises 219 residues: Dynein light chain Tctex-type 4 (219 aa).

The interval 1 to 84 (MACRTLPSRR…RRPSLGPVPP (84 aa)) is disordered. Residues 9 to 20 (RRQEEETTKDLA) show a composition bias toward basic and acidic residues. Ser64 is modified (phosphoserine).

The protein belongs to the dynein light chain Tctex-type family. In terms of assembly, interacts with ENG/endoglin, TGFBR2 and TGFBR3. Interacts with PPP1CC.

The protein localises to the cell projection. Its subcellular location is the cilium. The protein resides in the flagellum. It localises to the cytoplasmic vesicle. It is found in the secretory vesicle. The protein localises to the acrosome. Its subcellular location is the cytoplasm. The protein resides in the cytoskeleton. It localises to the cilium axoneme. It is found in the nucleus. The protein localises to the microtubule organizing center. This is Dynein light chain Tctex-type 4 (Dynlt4) from Mus musculus (Mouse).